Reading from the N-terminus, the 199-residue chain is MEQFDFDSIFNNAVGNMKYFIKKVKKYEEIKKHEDILKKDLLNAVNVFIERFRNNPCICKNRNNHSSCTTNACGEIENRMKNWVEKLFEYSDDEEKLNEFFKIIAKDAMKFVELDFEPLYILCGLEEIRETAEEKLKEELPTEEYLKVMEEFDDLIERMSLVATAVYMEFEDRVFERMGINKNLKYNIIKLGLKKMNIN.

The protein to M.jannaschii MJ1356.

This is an uncharacterized protein from Methanocaldococcus jannaschii (strain ATCC 43067 / DSM 2661 / JAL-1 / JCM 10045 / NBRC 100440) (Methanococcus jannaschii).